We begin with the raw amino-acid sequence, 91 residues long: Cell division protein ZapA (91 aa).

A coiled-coil region spans residues 58 to 91 (LTAVNIASEYLKLKEEYNRLREQLKKEKDGERDD).

This sequence belongs to the ZapA family. Type 2 subfamily. As to quaternary structure, homodimer. Interacts with FtsZ.

The protein resides in the cytoplasm. Its function is as follows. Activator of cell division through the inhibition of FtsZ GTPase activity, therefore promoting FtsZ assembly into bundles of protofilaments necessary for the formation of the division Z ring. It is recruited early at mid-cell but it is not essential for cell division. This is Cell division protein ZapA from Geobacillus kaustophilus (strain HTA426).